A 302-amino-acid chain; its full sequence is Sulfate adenylyltransferase subunit 2 (302 aa).

A disordered region spans residues 280–302 (RQGRAIDHDQSGSMELKKRQGYF).

It belongs to the PAPS reductase family. CysD subfamily. Heterodimer composed of CysD, the smaller subunit, and CysN.

The enzyme catalyses sulfate + ATP + H(+) = adenosine 5'-phosphosulfate + diphosphate. Its pathway is sulfur metabolism; hydrogen sulfide biosynthesis; sulfite from sulfate: step 1/3. Its function is as follows. With CysN forms the ATP sulfurylase (ATPS) that catalyzes the adenylation of sulfate producing adenosine 5'-phosphosulfate (APS) and diphosphate, the first enzymatic step in sulfur assimilation pathway. APS synthesis involves the formation of a high-energy phosphoric-sulfuric acid anhydride bond driven by GTP hydrolysis by CysN coupled to ATP hydrolysis by CysD. The sequence is that of Sulfate adenylyltransferase subunit 2 from Vibrio vulnificus (strain CMCP6).